The chain runs to 598 residues: uncharacterized protein (598 aa).

S46 carries the phosphoserine modification. The region spanning 106–441 (LQNHLKTGPF…ADYISLSYSG (336 aa)) is the SAC domain. Transmembrane regions (helical) follow at residues 508–528 (TIRC…MTLF) and 535–555 (ILPP…SLYY).

Its subcellular location is the endoplasmic reticulum membrane. This is an uncharacterized protein from Schizosaccharomyces pombe (strain 972 / ATCC 24843) (Fission yeast).